The primary structure comprises 60 residues: Cytotoxin sagitoxin (60 aa).

Disulfide bonds link Cys-3/Cys-21, Cys-14/Cys-38, Cys-42/Cys-53, and Cys-54/Cys-59.

It belongs to the three-finger toxin family. Short-chain subfamily. Type IA cytotoxin sub-subfamily. In terms of assembly, monomer in solution; Homodimer and oligomer (homohexamer) in the presence of negatively charged lipids forming a pore with a size ranging between 20 and 30 Angstroms. Expressed by the venom gland.

Its subcellular location is the secreted. It is found in the target cell membrane. Functionally, shows cytolytic activity on many different cells by forming pore in lipid membranes. In vivo, increases heart rate or kill the animal by cardiac arrest. In addition, it binds to heparin with high affinity, interacts with Kv channel-interacting protein 1 (KCNIP1) in a calcium-independent manner, and binds to integrin alpha-V/beta-3 (ITGAV/ITGB3) with moderate affinity. In Naja sagittifera (Andaman cobra), this protein is Cytotoxin sagitoxin.